Consider the following 160-residue polypeptide: Probable chemoreceptor glutamine deamidase CheD 2 (160 aa).

This sequence belongs to the CheD family.

The enzyme catalyses L-glutaminyl-[protein] + H2O = L-glutamyl-[protein] + NH4(+). Its function is as follows. Probably deamidates glutamine residues to glutamate on methyl-accepting chemotaxis receptors (MCPs), playing an important role in chemotaxis. The polypeptide is Probable chemoreceptor glutamine deamidase CheD 2 (Geobacter sulfurreducens (strain ATCC 51573 / DSM 12127 / PCA)).